The primary structure comprises 51 residues: Insulin (51 aa).

Cystine bridges form between Cys-7/Cys-37, Cys-19/Cys-50, and Cys-36/Cys-41.

Belongs to the insulin family. Heterodimer of a B chain and an A chain linked by two disulfide bonds.

It is found in the secreted. Functionally, insulin decreases blood glucose concentration. It increases cell permeability to monosaccharides, amino acids and fatty acids. It accelerates glycolysis, the pentose phosphate cycle, and glycogen synthesis in liver. This chain is Insulin (INS), found in Meleagris gallopavo (Wild turkey).